We begin with the raw amino-acid sequence, 102 residues long: Putative pterin-4-alpha-carbinolamine dehydratase (102 aa).

The protein belongs to the pterin-4-alpha-carbinolamine dehydratase family.

It catalyses the reaction (4aS,6R)-4a-hydroxy-L-erythro-5,6,7,8-tetrahydrobiopterin = (6R)-L-erythro-6,7-dihydrobiopterin + H2O. This Burkholderia cenocepacia (strain HI2424) protein is Putative pterin-4-alpha-carbinolamine dehydratase.